A 225-amino-acid chain; its full sequence is Biosynthetic peptidoglycan transglycosylase (225 aa).

A helical membrane pass occupies residues 8–28 (VLLIFIGAILFIQLWIFSSLV).

The protein belongs to the glycosyltransferase 51 family.

The protein resides in the cell inner membrane. The catalysed reaction is [GlcNAc-(1-&gt;4)-Mur2Ac(oyl-L-Ala-gamma-D-Glu-L-Lys-D-Ala-D-Ala)](n)-di-trans,octa-cis-undecaprenyl diphosphate + beta-D-GlcNAc-(1-&gt;4)-Mur2Ac(oyl-L-Ala-gamma-D-Glu-L-Lys-D-Ala-D-Ala)-di-trans,octa-cis-undecaprenyl diphosphate = [GlcNAc-(1-&gt;4)-Mur2Ac(oyl-L-Ala-gamma-D-Glu-L-Lys-D-Ala-D-Ala)](n+1)-di-trans,octa-cis-undecaprenyl diphosphate + di-trans,octa-cis-undecaprenyl diphosphate + H(+). It participates in cell wall biogenesis; peptidoglycan biosynthesis. In terms of biological role, peptidoglycan polymerase that catalyzes glycan chain elongation from lipid-linked precursors. The chain is Biosynthetic peptidoglycan transglycosylase from Acinetobacter baumannii (strain ATCC 17978 / DSM 105126 / CIP 53.77 / LMG 1025 / NCDC KC755 / 5377).